Consider the following 234-residue polypeptide: MAPVKVVLLDIEGTVCPISFVKDVLFPYALEALPGTLKAKWDSPGFASYRAAFPAEHAGSQETLAAHVRDLMSKDLKISYLKSLQGYLWETGYRNGELKAPLFADVAPQLARWREHNGAKVMIYSSGSVPAQKLLFGHTNGEPSDILPWLSDFFDTVNAGPKQEKASYEKIAAKHQEYPIGEWLFLSDNVKEVEAAKQAGMQSYIVDRPGNAELSEEARKEHRVVKSFEEIGDL.

The Mg(2+) site is built by D10 and E12. Substrate contacts are provided by residues 125-126 (SS) and K162. Position 188 (D188) interacts with Mg(2+).

Belongs to the HAD-like hydrolase superfamily. MasA/MtnC family. Monomer. Requires Mg(2+) as cofactor.

The protein resides in the cytoplasm. It localises to the nucleus. It carries out the reaction 5-methylsulfanyl-2,3-dioxopentyl phosphate + H2O = 1,2-dihydroxy-5-(methylsulfanyl)pent-1-en-3-one + phosphate. Its pathway is amino-acid biosynthesis; L-methionine biosynthesis via salvage pathway; L-methionine from S-methyl-5-thio-alpha-D-ribose 1-phosphate: step 3/6. It participates in amino-acid biosynthesis; L-methionine biosynthesis via salvage pathway; L-methionine from S-methyl-5-thio-alpha-D-ribose 1-phosphate: step 4/6. Functionally, bifunctional enzyme that catalyzes the enolization of 2,3-diketo-5-methylthiopentyl-1-phosphate (DK-MTP-1-P) into the intermediate 2-hydroxy-3-keto-5-methylthiopentenyl-1-phosphate (HK-MTPenyl-1-P), which is then dephosphorylated to form the acireductone 1,2-dihydroxy-3-keto-5-methylthiopentene (DHK-MTPene). This Sordaria macrospora (strain ATCC MYA-333 / DSM 997 / K(L3346) / K-hell) protein is Enolase-phosphatase E1.